The following is a 178-amino-acid chain: UPF0114 protein in repA1-repA2 intergenic region (178 aa).

A run of 3 helical transmembrane segments spans residues 14–34 (WLIF…TLKF), 53–73 (LILV…LVMV), and 136–156 (WYVI…YIDR).

This sequence belongs to the UPF0114 family.

The protein localises to the cell membrane. The chain is UPF0114 protein in repA1-repA2 intergenic region from Buchnera aphidicola subsp. Tetraneura caerulescens.